We begin with the raw amino-acid sequence, 163 residues long: Phosphopantetheine adenylyltransferase (163 aa).

Residue serine 10 participates in substrate binding. Residues 10-11 and histidine 18 contribute to the ATP site; that span reads SF. The substrate site is built by lysine 42, leucine 78, and lysine 92. ATP is bound by residues 93-95, glutamate 103, and 127-133; these read GVR and HAHVSSS.

The protein belongs to the bacterial CoaD family. As to quaternary structure, homohexamer. The cofactor is Mg(2+).

Its subcellular location is the cytoplasm. It carries out the reaction (R)-4'-phosphopantetheine + ATP + H(+) = 3'-dephospho-CoA + diphosphate. It participates in cofactor biosynthesis; coenzyme A biosynthesis; CoA from (R)-pantothenate: step 4/5. In terms of biological role, reversibly transfers an adenylyl group from ATP to 4'-phosphopantetheine, yielding dephospho-CoA (dPCoA) and pyrophosphate. In Clavibacter michiganensis subsp. michiganensis (strain NCPPB 382), this protein is Phosphopantetheine adenylyltransferase.